Consider the following 308-residue polypeptide: Ribonuclease Z (308 aa).

Residues H61, H63, D65, H66, H139, D210, and H268 each coordinate Zn(2+). D65 functions as the Proton acceptor in the catalytic mechanism.

This sequence belongs to the RNase Z family. Homodimer. Zn(2+) is required as a cofactor.

The enzyme catalyses Endonucleolytic cleavage of RNA, removing extra 3' nucleotides from tRNA precursor, generating 3' termini of tRNAs. A 3'-hydroxy group is left at the tRNA terminus and a 5'-phosphoryl group is left at the trailer molecule.. Functionally, zinc phosphodiesterase, which displays some tRNA 3'-processing endonuclease activity. Probably involved in tRNA maturation, by removing a 3'-trailer from precursor tRNA. The chain is Ribonuclease Z from Halobacterium salinarum (strain ATCC 700922 / JCM 11081 / NRC-1) (Halobacterium halobium).